Here is a 333-residue protein sequence, read N- to C-terminus: Ketol-acid reductoisomerase (NADP(+)) (333 aa).

Positions 2–182 (ANIYYDSDCD…GGGRAGILET (181 aa)) constitute a KARI N-terminal Rossmann domain. NADP(+) contacts are provided by residues 25 to 28 (YGSQ), Lys48, Ser51, Ser53, and 83 to 86 (DTIQ). Residue His108 is part of the active site. Gly134 contributes to the NADP(+) binding site. A KARI C-terminal knotted domain is found at 183–331 (SFREETETDL…KKLRSMMKWL (149 aa)). Mg(2+) is bound by residues Asp191, Glu195, Glu227, and Glu231. Ser252 lines the substrate pocket.

The protein belongs to the ketol-acid reductoisomerase family. Requires Mg(2+) as cofactor.

The catalysed reaction is (2R)-2,3-dihydroxy-3-methylbutanoate + NADP(+) = (2S)-2-acetolactate + NADPH + H(+). The enzyme catalyses (2R,3R)-2,3-dihydroxy-3-methylpentanoate + NADP(+) = (S)-2-ethyl-2-hydroxy-3-oxobutanoate + NADPH + H(+). Its pathway is amino-acid biosynthesis; L-isoleucine biosynthesis; L-isoleucine from 2-oxobutanoate: step 2/4. The protein operates within amino-acid biosynthesis; L-valine biosynthesis; L-valine from pyruvate: step 2/4. Functionally, involved in the biosynthesis of branched-chain amino acids (BCAA). Catalyzes an alkyl-migration followed by a ketol-acid reduction of (S)-2-acetolactate (S2AL) to yield (R)-2,3-dihydroxy-isovalerate. In the isomerase reaction, S2AL is rearranged via a Mg-dependent methyl migration to produce 3-hydroxy-3-methyl-2-ketobutyrate (HMKB). In the reductase reaction, this 2-ketoacid undergoes a metal-dependent reduction by NADPH to yield (R)-2,3-dihydroxy-isovalerate. The sequence is that of Ketol-acid reductoisomerase (NADP(+)) from Leptospira interrogans serogroup Icterohaemorrhagiae serovar copenhageni (strain Fiocruz L1-130).